The following is a 64-amino-acid chain: Large ribosomal subunit protein bL32 (64 aa).

Positions 1–36 (MAVQKSRVTPSRRGQRRSHDALSAKQLSTDPTTGEV) are disordered.

It belongs to the bacterial ribosomal protein bL32 family.

The protein is Large ribosomal subunit protein bL32 of Stenotrophomonas maltophilia (strain K279a).